The chain runs to 245 residues: UPF0319 protein VV0984 (245 aa).

Residues 1–20 (MRYIGKWMMLGALVSSSVFA) form the signal peptide.

This sequence belongs to the UPF0319 family.

This chain is UPF0319 protein VV0984, found in Vibrio vulnificus (strain YJ016).